Consider the following 156-residue polypeptide: S-ribosylhomocysteine lyase (156 aa).

Fe cation is bound by residues histidine 56, histidine 60, and cysteine 123.

Belongs to the LuxS family. In terms of assembly, homodimer. The cofactor is Fe cation.

The catalysed reaction is S-(5-deoxy-D-ribos-5-yl)-L-homocysteine = (S)-4,5-dihydroxypentane-2,3-dione + L-homocysteine. Involved in the synthesis of autoinducer 2 (AI-2) which is secreted by bacteria and is used to communicate both the cell density and the metabolic potential of the environment. The regulation of gene expression in response to changes in cell density is called quorum sensing. Catalyzes the transformation of S-ribosylhomocysteine (RHC) to homocysteine (HC) and 4,5-dihydroxy-2,3-pentadione (DPD). In Staphylococcus haemolyticus (strain JCSC1435), this protein is S-ribosylhomocysteine lyase.